The following is a 253-amino-acid chain: uncharacterized protein (253 aa).

7-14 provides a ligand contact to ATP; that stretch reads GKGGVGKT.

It to M.jannaschii MJ0084 and MJ0823.

This is an uncharacterized protein from Methanocaldococcus jannaschii (strain ATCC 43067 / DSM 2661 / JAL-1 / JCM 10045 / NBRC 100440) (Methanococcus jannaschii).